The primary structure comprises 380 residues: Cytochrome b (380 aa).

4 consecutive transmembrane segments (helical) span residues 34-54, 78-99, 114-134, and 179-199; these read FGSLLGICLMTQILTGLLLAM, WLIRNLHANGASFFFICIYFHI, WNTGVILLLTLMATAFVGYVL, and FFALHFLLPFMIAGLTLIHLT. Heme b-binding residues include histidine 84 and histidine 98. Residues histidine 183 and histidine 197 each contribute to the heme b site. An a ubiquinone-binding site is contributed by histidine 202. The next 4 helical transmembrane spans lie at 227-247, 289-309, 321-341, and 348-368; these read LKDILGFTLMFLPLTTLALFS, LGGVLALAASVLILFLIPFLH, ISQLLFWILVANLLILTWVGS, and FIIIGQLASVTYFTILLVLFP.

This sequence belongs to the cytochrome b family. In terms of assembly, the cytochrome bc1 complex contains 11 subunits: 3 respiratory subunits (MT-CYB, CYC1 and UQCRFS1), 2 core proteins (UQCRC1 and UQCRC2) and 6 low-molecular weight proteins (UQCRH/QCR6, UQCRB/QCR7, UQCRQ/QCR8, UQCR10/QCR9, UQCR11/QCR10 and a cleavage product of UQCRFS1). This cytochrome bc1 complex then forms a dimer. The cofactor is heme b.

It localises to the mitochondrion inner membrane. Component of the ubiquinol-cytochrome c reductase complex (complex III or cytochrome b-c1 complex) that is part of the mitochondrial respiratory chain. The b-c1 complex mediates electron transfer from ubiquinol to cytochrome c. Contributes to the generation of a proton gradient across the mitochondrial membrane that is then used for ATP synthesis. The protein is Cytochrome b (MT-CYB) of Pachyptila salvini (Salvin's prion).